A 466-amino-acid polypeptide reads, in one-letter code: L-seryl-tRNA(Sec) selenium transferase (466 aa).

Lys293 bears the N6-(pyridoxal phosphate)lysine mark.

Belongs to the SelA family. Requires pyridoxal 5'-phosphate as cofactor.

The protein localises to the cytoplasm. It carries out the reaction L-seryl-tRNA(Sec) + selenophosphate + H(+) = L-selenocysteinyl-tRNA(Sec) + phosphate. Its pathway is aminoacyl-tRNA biosynthesis; selenocysteinyl-tRNA(Sec) biosynthesis; selenocysteinyl-tRNA(Sec) from L-seryl-tRNA(Sec) (bacterial route): step 1/1. Functionally, converts seryl-tRNA(Sec) to selenocysteinyl-tRNA(Sec) required for selenoprotein biosynthesis. This chain is L-seryl-tRNA(Sec) selenium transferase, found in Desulfotalea psychrophila (strain LSv54 / DSM 12343).